Consider the following 414-residue polypeptide: Esterase FrsA (414 aa).

It belongs to the FrsA family.

The enzyme catalyses a carboxylic ester + H2O = an alcohol + a carboxylate + H(+). Functionally, catalyzes the hydrolysis of esters. The chain is Esterase FrsA from Escherichia coli O45:K1 (strain S88 / ExPEC).